A 230-amino-acid polypeptide reads, in one-letter code: MKDSKELKIMTVDDAVAQIEDNMVLGIGTGSTIELLIPKLAERIHKEQLNITGVCTSNKSAFIAKKLDINVVDINDVGHVDLAIDGADEVDVNINLIKGGGGALFREKVIDEMAHRFVVLADESKLVNYLGESFKLPVEVDKFNWFHIAKKIEAFDDIITERRMSDDVPFITDNGNYILDCQLNKQIDPYQFHEYLIHLTGVLETGYFLNITDQVIVGTQDGVKIINKSN.

Residues 29–32 (TGST), 85–88 (DGAD), and 98–101 (KGGG) each bind substrate. Glu107 functions as the Proton acceptor in the catalytic mechanism. Lys125 contributes to the substrate binding site.

This sequence belongs to the ribose 5-phosphate isomerase family. Homodimer.

The catalysed reaction is aldehydo-D-ribose 5-phosphate = D-ribulose 5-phosphate. It functions in the pathway carbohydrate degradation; pentose phosphate pathway; D-ribose 5-phosphate from D-ribulose 5-phosphate (non-oxidative stage): step 1/1. Catalyzes the reversible conversion of ribose-5-phosphate to ribulose 5-phosphate. This Staphylococcus haemolyticus (strain JCSC1435) protein is Ribose-5-phosphate isomerase A.